The primary structure comprises 159 residues: Putative 4-hydroxy-4-methyl-2-oxoglutarate aldolase (159 aa).

Residues 78 to 81 (GDVI) and Arg100 contribute to the substrate site. Asp101 contacts a divalent metal cation.

Belongs to the class II aldolase/RraA-like family. Homotrimer. Requires a divalent metal cation as cofactor.

The enzyme catalyses 4-hydroxy-4-methyl-2-oxoglutarate = 2 pyruvate. The catalysed reaction is oxaloacetate + H(+) = pyruvate + CO2. Its function is as follows. Catalyzes the aldol cleavage of 4-hydroxy-4-methyl-2-oxoglutarate (HMG) into 2 molecules of pyruvate. Also contains a secondary oxaloacetate (OAA) decarboxylase activity due to the common pyruvate enolate transition state formed following C-C bond cleavage in the retro-aldol and decarboxylation reactions. The chain is Putative 4-hydroxy-4-methyl-2-oxoglutarate aldolase from Mycobacterium sp. (strain KMS).